The following is a 431-amino-acid chain: Probable ganciclovir kinase (431 aa).

One can recognise a Protein kinase domain in the interval 79–368 (PQEDAVLGSG…KLSIGIDSFG (290 aa)). ATP is bound by residues 85-93 (LGSGSFGSV) and Lys-103. The active-site Proton acceptor is Asp-195.

This sequence belongs to the protein kinase superfamily. Tyr protein kinase family. HCMV ganciclovir subfamily.

Functionally, phosphorylates the antiviral nucleoside analog ganciclovir. The polypeptide is Probable ganciclovir kinase (36) (Saimiriine herpesvirus 2 (strain 11) (SaHV-2)).